Reading from the N-terminus, the 471-residue chain is MDILCEENTSLSSTTNSLMQLNDDTRLYSNDFNSGEANTSDAFNWTVDSENRTNLSCEGCLSPSCLSLLHLQEKNWSALLTAVVIILTIAGNILVIMAVSLEKKLQNATNYFLMSLAIADMLLGFLVMPVSMLTILYGYRWPLPSKLCAVWIYLDVLFSTASIMHLCAISLDRYVAIQNPIHHSRFNSRTKAFLKIIAVWTISVGISMPIPVFGLQDDSKVFKEGSCLLADDNFVLIGSFVSFFIPLTIMVITYFLTIKSLQKEATLCVSDLGTRAKLASFSFLPQSSLSSEKLFQRSIHREPGSYTGRRTMQSISNEQKACKVLGIVFSLFVVMWCPFFITNIMAVICKESCNEDVIGALLNVFVWIGYLSSAVNPLVYTLFNKTYRSAFSRYIQCQYKENKKPLQLILVNTIPALAYKSSQLQMGQKKNSKQDAKTTDNDCSMVALGKQHSEDASKDNSDGVNEKVSCV.

Residues 1–80 (MDILCEENTS…LQEKNWSALL (80 aa)) are Extracellular-facing. N-linked (GlcNAc...) asparagine glycosylation is present at N38. Residues 81-97 (TAVVIILTIAGNILVIM) traverse the membrane as a helical segment. The Cytoplasmic segment spans residues 98 to 111 (AVSLEKKLQNATNY). A helical membrane pass occupies residues 112–137 (FLMSLAIADMLLGFLVMPVSMLTILY). Residues 138–146 (GYRWPLPSK) lie on the Extracellular side of the membrane. A helical membrane pass occupies residues 147–171 (LCAVWIYLDVLFSTASIMHLCAISL). The cysteines at positions 148 and 227 are disulfide-linked. Residue D155 coordinates serotonin. A DRY motif; important for ligand-induced conformation changes motif is present at residues 172–174 (DRY). Topologically, residues 172 to 191 (DRYVAIQNPIHHSRFNSRTK) are cytoplasmic. The helical transmembrane segment at 192–215 (AFLKIIAVWTISVGISMPIPVFGL) threads the bilayer. The Extracellular segment spans residues 216 to 232 (QDDSKVFKEGSCLLADD). Residues 233 to 258 (NFVLIGSFVSFFIPLTIMVITYFLTI) traverse the membrane as a helical segment. Over 259–322 (KSLQKEATLC…QSISNEQKAC (64 aa)) the chain is Cytoplasmic. Residue S280 is modified to Phosphoserine. A helical transmembrane segment spans residues 323-348 (KVLGIVFSLFVVMWCPFFITNIMAVI). A serotonin-binding site is contributed by N343. C349 and C353 form a disulfide bridge. Topologically, residues 349 to 356 (CKESCNED) are extracellular. A helical membrane pass occupies residues 357-382 (VIGALLNVFVWIGYLSSAVNPLVYTL). Residues 376–380 (NPLVY) carry the NPxxY motif; important for ligand-induced conformation changes and signaling motif. Over 383–471 (FNKTYRSAFS…DGVNEKVSCV (89 aa)) the chain is Cytoplasmic. A disordered region spans residues 450–471 (KQHSEDASKDNSDGVNEKVSCV). Residues 451–465 (QHSEDASKDNSDGVN) show a composition bias toward basic and acidic residues. Positions 469-471 (SCV) match the PDZ-binding motif.

This sequence belongs to the G-protein coupled receptor 1 family. Interacts (via C-terminus) with MPDZ and PATJ. May interact (via C-terminus) with MPP3, PRDX6, DLG4, DLG1, CASK, APBA1 and MAGI2. Interacts with GRM2 and DRD2; this may affect signaling.

Its subcellular location is the cell membrane. The protein resides in the cell projection. It is found in the dendrite. It localises to the axon. The protein localises to the cytoplasmic vesicle. Its subcellular location is the membrane. The protein resides in the caveola. It is found in the presynapse. Its activity is regulated as follows. G-protein coupled receptor activity is regulated by lipids: oleamide increases HTR2A-mediated activity. Functionally, G-protein coupled receptor for 5-hydroxytryptamine (serotonin). Also functions as a receptor for various drugs and psychoactive substances, including mescaline, psilocybin, 1-(2,5-dimethoxy-4-iodophenyl)-2-aminopropane (DOI) and lysergic acid diethylamide (LSD). Ligand binding causes a conformation change that triggers signaling via guanine nucleotide-binding proteins (G proteins) and modulates the activity of downstream effectors. HTR2A is coupled to G(q)/G(11) G alpha proteins and activates phospholipase C-beta, releasing diacylglycerol (DAG) and inositol 1,4,5-trisphosphate (IP3) second messengers that modulate the activity of phosphatidylinositol 3-kinase and promote the release of Ca(2+) ions from intracellular stores, respectively. Beta-arrestin family members inhibit signaling via G proteins and mediate activation of alternative signaling pathways. Affects neural activity, perception, cognition and mood. Plays a role in the regulation of behavior, including responses to anxiogenic situations and psychoactive substances. Plays a role in intestinal smooth muscle contraction, and may play a role in arterial vasoconstriction. In Pongo pygmaeus (Bornean orangutan), this protein is 5-hydroxytryptamine receptor 2A (HTR2A).